The primary structure comprises 314 residues: tRNA dimethylallyltransferase (314 aa).

40 to 47 provides a ligand contact to ATP; sequence GPTASGKS. 42–47 lines the substrate pocket; that stretch reads TASGKS.

The protein belongs to the IPP transferase family. In terms of assembly, monomer. Requires Mg(2+) as cofactor.

The catalysed reaction is adenosine(37) in tRNA + dimethylallyl diphosphate = N(6)-dimethylallyladenosine(37) in tRNA + diphosphate. Its function is as follows. Catalyzes the transfer of a dimethylallyl group onto the adenine at position 37 in tRNAs that read codons beginning with uridine, leading to the formation of N6-(dimethylallyl)adenosine (i(6)A). The protein is tRNA dimethylallyltransferase of Cereibacter sphaeroides (strain KD131 / KCTC 12085) (Rhodobacter sphaeroides).